We begin with the raw amino-acid sequence, 319 residues long: Beta-ketoacyl-[acyl-carrier-protein] synthase III (319 aa).

Active-site residues include cysteine 112 and histidine 246. An ACP-binding region spans residues 247 to 251; the sequence is QANKR. Residue asparagine 276 is part of the active site.

This sequence belongs to the thiolase-like superfamily. FabH family. Homodimer.

It is found in the cytoplasm. It catalyses the reaction malonyl-[ACP] + acetyl-CoA + H(+) = 3-oxobutanoyl-[ACP] + CO2 + CoA. It functions in the pathway lipid metabolism; fatty acid biosynthesis. Its function is as follows. Catalyzes the condensation reaction of fatty acid synthesis by the addition to an acyl acceptor of two carbons from malonyl-ACP. Catalyzes the first condensation reaction which initiates fatty acid synthesis and may therefore play a role in governing the total rate of fatty acid production. Possesses both acetoacetyl-ACP synthase and acetyl transacylase activities. Its substrate specificity determines the biosynthesis of branched-chain and/or straight-chain of fatty acids. This Psychromonas ingrahamii (strain DSM 17664 / CCUG 51855 / 37) protein is Beta-ketoacyl-[acyl-carrier-protein] synthase III.